A 301-amino-acid polypeptide reads, in one-letter code: 33 kDa chaperonin (301 aa).

2 disulfide bridges follow: C244–C246 and C277–C280.

This sequence belongs to the HSP33 family. Post-translationally, under oxidizing conditions two disulfide bonds are formed involving the reactive cysteines. Under reducing conditions zinc is bound to the reactive cysteines and the protein is inactive.

It is found in the cytoplasm. Functionally, redox regulated molecular chaperone. Protects both thermally unfolding and oxidatively damaged proteins from irreversible aggregation. Plays an important role in the bacterial defense system toward oxidative stress. The protein is 33 kDa chaperonin of Geobacter sulfurreducens (strain ATCC 51573 / DSM 12127 / PCA).